A 399-amino-acid polypeptide reads, in one-letter code: MDAATTTAGLSDLKFRLVRESFADAVSWVAKSLPSRPAVPVLSGVLLSGTDEGLTISGFDYEVSAEAQVAAEIASPGSVLVSGRLLSDIVRALPNKPIDFYVDGNRVALNCGSARFSLPTMAVEDYPTLPTLPEETGTLPADLFAEAIGQVAIAAGRDDTLPMLTGIRVEISGDTVVLAATDRFRLAVRELTWSAASPDIEAAVLVPAKTLAEAARTGIDGSDVRLSLGAGAGVGKDGLLGISGNGKRSTTRLLDAEFPKFRQLLPAEHTAVATINVAELTEAIKLVALVADRGAQVRMEFSEGSLRLSAGADDVGRAEEDLAVDFAGEPLTIAFNPTYLTDGLGSVRSERVSFGFTTPGKPALLRPASDDDSPPSGSGPFSALPTDYVYLLMPVRLPG.

Belongs to the beta sliding clamp family. Forms a ring-shaped head-to-tail homodimer around DNA which binds and tethers DNA polymerases and other proteins to the DNA. The DNA replisome complex has a single clamp-loading complex (3 tau and 1 each of delta, delta', psi and chi subunits) which binds 3 Pol III cores (1 core on the leading strand and 2 on the lagging strand) each with a beta sliding clamp dimer. Additional proteins in the replisome are other copies of gamma, psi and chi, Ssb, DNA helicase and RNA primase.

The protein resides in the cytoplasm. Its function is as follows. Confers DNA tethering and processivity to DNA polymerases and other proteins. Acts as a clamp, forming a ring around DNA (a reaction catalyzed by the clamp-loading complex) which diffuses in an ATP-independent manner freely and bidirectionally along dsDNA. Initially characterized for its ability to contact the catalytic subunit of DNA polymerase III (Pol III), a complex, multichain enzyme responsible for most of the replicative synthesis in bacteria; Pol III exhibits 3'-5' exonuclease proofreading activity. The beta chain is required for initiation of replication as well as for processivity of DNA replication. This is Beta sliding clamp (dnaN) from Mycolicibacterium paratuberculosis (strain ATCC BAA-968 / K-10) (Mycobacterium paratuberculosis).